Here is a 137-residue protein sequence, read N- to C-terminus: Cytochrome b5 (137 aa).

The region spanning Lys-6 to Asp-82 is the Cytochrome b5 heme-binding domain. His-41 and His-65 together coordinate heme. Residues Phe-108 to Ile-128 form a helical membrane-spanning segment.

Belongs to the cytochrome b5 family.

The protein resides in the endoplasmic reticulum membrane. The protein localises to the microsome membrane. Membrane bound hemoprotein which function as an electron carrier for several membrane bound oxygenases. This is Cytochrome b5 from Oryza sativa subsp. japonica (Rice).